The sequence spans 302 residues: GLABROUS1 enhancer-binding protein (302 aa).

Disordered stretches follow at residues methionine 1 to lysine 55 and glycine 158 to aspartate 229. At serine 27 the chain carries Phosphoserine. The segment covering arginine 180–glutamate 195 has biased composition (basic and acidic residues). Over residues alanine 208 to serine 217 the composition is skewed to polar residues. The interval leucine 270–phenylalanine 291 is non-canonical leucine-zipper.

The protein belongs to the GeBP family. Homo- and heterodimers. Interacts with GPL1, GPL2 and GPL3. Interacts with KIN10, KIN11 and FLZ4. Interacts with KIN10 and KIN11 via its N-terminal part. Interacts with GPL1 and GPL3 via its C-terminal part. In terms of tissue distribution, expressed in the apical meristem and young leaf primordia. Not detected in emerging or mature leaves. Detected in the vascular tissues of cotyledons and leaves, in hydathodes and at the base of flowers and siliques, but not in roots.

Its subcellular location is the nucleus. The protein localises to the nucleolus. In terms of biological role, DNA-binding protein, which specifically recognizes the GL1 enhancer sequence. May be involved in leaf initiation. May play redundant roles with GPL1 and GPL2 in cytokinin responses by regulating the transcript levels of type-A ARR response genes. Involved in stress responses. Plays a repressive role in cell expansion by counteracting the positive role of CPR5 in this process, but does not regulate cell proliferation or endoreduplication. May play a role in plant defense. The protein is GLABROUS1 enhancer-binding protein of Arabidopsis thaliana (Mouse-ear cress).